A 119-amino-acid polypeptide reads, in one-letter code: Ribosome-binding factor A (119 aa).

Belongs to the RbfA family. As to quaternary structure, monomer. Binds 30S ribosomal subunits, but not 50S ribosomal subunits or 70S ribosomes.

The protein resides in the cytoplasm. In terms of biological role, one of several proteins that assist in the late maturation steps of the functional core of the 30S ribosomal subunit. Associates with free 30S ribosomal subunits (but not with 30S subunits that are part of 70S ribosomes or polysomes). Required for efficient processing of 16S rRNA. May interact with the 5'-terminal helix region of 16S rRNA. In Limosilactobacillus reuteri (strain DSM 20016) (Lactobacillus reuteri), this protein is Ribosome-binding factor A.